The primary structure comprises 299 residues: ATP phosphoribosyltransferase (299 aa).

Belongs to the ATP phosphoribosyltransferase family. Long subfamily. Equilibrium between an active dimeric form, an inactive hexameric form and higher aggregates. Interconversion between the various forms is largely reversible and is influenced by the natural substrates and inhibitors of the enzyme. Requires Mg(2+) as cofactor.

The protein resides in the cytoplasm. The enzyme catalyses 1-(5-phospho-beta-D-ribosyl)-ATP + diphosphate = 5-phospho-alpha-D-ribose 1-diphosphate + ATP. Its pathway is amino-acid biosynthesis; L-histidine biosynthesis; L-histidine from 5-phospho-alpha-D-ribose 1-diphosphate: step 1/9. Its activity is regulated as follows. Feedback inhibited by histidine. Its function is as follows. Catalyzes the condensation of ATP and 5-phosphoribose 1-diphosphate to form N'-(5'-phosphoribosyl)-ATP (PR-ATP). Has a crucial role in the pathway because the rate of histidine biosynthesis seems to be controlled primarily by regulation of HisG enzymatic activity. This Salmonella enteritidis PT4 (strain P125109) protein is ATP phosphoribosyltransferase.